Reading from the N-terminus, the 335-residue chain is uncharacterized protein (335 aa).

Residues 201-236 (GPMAKNKARRKEDNYDTHNCDDANQDKKEEAEGKNT) form a disordered region. A compositionally biased stretch (basic and acidic residues) spans 210–235 (RKEDNYDTHNCDDANQDKKEEAEGKN).

Dispensable for normal development and fertility. This is an uncharacterized protein from Homo sapiens (Human).